The chain runs to 579 residues: Proteasome-associated ATPase (579 aa).

A disordered region spans residues 1-21; that stretch reads MPRDETPEREHAEQQSRQALE. A coiled-coil region spans residues 8-86; that stretch reads EREHAEQQSR…REEVEKLTQP (79 aa). ATP is bound at residue 268–273; that stretch reads GCGKTL. Residues 578–579 are docks into pockets in the proteasome alpha-ring; sequence YL.

The protein belongs to the AAA ATPase family. In terms of assembly, homohexamer. Assembles into a hexameric ring structure that caps the 20S proteasome core. Strongly interacts with the prokaryotic ubiquitin-like protein Pup through a hydrophobic interface; the interacting region of ARC lies in its N-terminal coiled-coil domain. There is one Pup binding site per ARC hexamer ring. Upon ATP-binding, the C-terminus of ARC interacts with the alpha-rings of the proteasome core, possibly by binding to the intersubunit pockets.

It functions in the pathway protein degradation; proteasomal Pup-dependent pathway. ATPase which is responsible for recognizing, binding, unfolding and translocation of pupylated proteins into the bacterial 20S proteasome core particle. May be essential for opening the gate of the 20S proteasome via an interaction with its C-terminus, thereby allowing substrate entry and access to the site of proteolysis. Thus, the C-termini of the proteasomal ATPase may function like a 'key in a lock' to induce gate opening and therefore regulate proteolysis. This Acidimicrobium ferrooxidans (strain DSM 10331 / JCM 15462 / NBRC 103882 / ICP) protein is Proteasome-associated ATPase.